The following is a 261-amino-acid chain: Precorrin-6A synthase [deacetylating] (261 aa).

It catalyses the reaction precorrin-5 + S-adenosyl-L-methionine + H2O = precorrin-6A + acetate + S-adenosyl-L-homocysteine + 2 H(+). It functions in the pathway cofactor biosynthesis; adenosylcobalamin biosynthesis; cob(II)yrinate a,c-diamide from precorrin-2 (aerobic route): step 5/10. Its function is as follows. Catalyzes the methylation of C-1 in precorrin-5 and the subsequent extrusion of acetic acid from the resulting intermediate to form cobalt-precorrin-6A. The protein is Precorrin-6A synthase [deacetylating] (cobF) of Sinorhizobium sp.